The primary structure comprises 635 residues: DNA-directed RNA polymerase subunit gamma (635 aa).

Residues Cys-74, Cys-76, Cys-89, and Cys-92 each contribute to the Zn(2+) site. The Mg(2+) site is built by Asp-471, Asp-473, and Asp-475.

This sequence belongs to the RNA polymerase beta' chain family. RpoC1 subfamily. As to quaternary structure, in cyanobacteria the RNAP catalytic core is composed of 2 alpha, 1 beta, 1 beta', 1 gamma and 1 omega subunit. When a sigma factor is associated with the core the holoenzyme is formed, which can initiate transcription. Mg(2+) serves as cofactor. The cofactor is Zn(2+).

It catalyses the reaction RNA(n) + a ribonucleoside 5'-triphosphate = RNA(n+1) + diphosphate. DNA-dependent RNA polymerase catalyzes the transcription of DNA into RNA using the four ribonucleoside triphosphates as substrates. The protein is DNA-directed RNA polymerase subunit gamma of Prochlorococcus marinus (strain NATL2A).